Here is a 228-residue protein sequence, read N- to C-terminus: N-acylneuraminate cytidylyltransferase (228 aa).

The protein belongs to the CMP-NeuNAc synthase family.

The protein localises to the cytoplasm. It carries out the reaction an N-acylneuraminate + CTP = a CMP-N-acyl-beta-neuraminate + diphosphate. In Neisseria meningitidis serogroup B (strain ATCC BAA-335 / MC58), this protein is N-acylneuraminate cytidylyltransferase (neuA).